A 431-amino-acid polypeptide reads, in one-letter code: Adenylosuccinate synthetase (431 aa).

GTP-binding positions include 13-19 and 41-43; these read GDEGKGK and GHT. The active-site Proton acceptor is the Asp14. Residues Asp14 and Gly41 each coordinate Mg(2+). Residues 14 to 17, 39 to 42, Thr130, Arg144, Gln225, Thr240, and Arg304 contribute to the IMP site; these read DEGK and NAGH. Catalysis depends on His42, which acts as the Proton donor. 300 to 306 is a substrate binding site; sequence ATTGRAR. Residues Arg306, 332 to 334, and 414 to 416 each bind GTP; these read KLD and STG.

The protein belongs to the adenylosuccinate synthetase family. In terms of assembly, homodimer. The cofactor is Mg(2+).

It is found in the cytoplasm. It carries out the reaction IMP + L-aspartate + GTP = N(6)-(1,2-dicarboxyethyl)-AMP + GDP + phosphate + 2 H(+). It functions in the pathway purine metabolism; AMP biosynthesis via de novo pathway; AMP from IMP: step 1/2. Functionally, plays an important role in the de novo pathway of purine nucleotide biosynthesis. Catalyzes the first committed step in the biosynthesis of AMP from IMP. This chain is Adenylosuccinate synthetase, found in Chromohalobacter salexigens (strain ATCC BAA-138 / DSM 3043 / CIP 106854 / NCIMB 13768 / 1H11).